Here is a 173-residue protein sequence, read N- to C-terminus: Large ribosomal subunit protein uL14mz (173 aa).

Residues 1 to 61 (MAAAFASRLT…TVLKVVDNSG (61 aa)) constitute a mitochondrion transit peptide.

It belongs to the universal ribosomal protein uL14 family. As to quaternary structure, part of the mitochondrial 50S ribosomal subunit. In terms of tissue distribution, mostly expressed in leaves and inflorescences, including floral organs and meristems, and, to a lower extent, in pistils.

It localises to the mitochondrion. Functionally, binds to 23S rRNA in mitochondrion. This is Large ribosomal subunit protein uL14mz (HLP) from Arabidopsis thaliana (Mouse-ear cress).